A 520-amino-acid chain; its full sequence is Bifunctional purine biosynthesis protein PurH (520 aa).

The region spanning 1-147 (MAKIGRALIS…KNNRDVTVVV (147 aa)) is the MGS-like domain.

This sequence belongs to the PurH family.

It carries out the reaction (6R)-10-formyltetrahydrofolate + 5-amino-1-(5-phospho-beta-D-ribosyl)imidazole-4-carboxamide = 5-formamido-1-(5-phospho-D-ribosyl)imidazole-4-carboxamide + (6S)-5,6,7,8-tetrahydrofolate. It catalyses the reaction IMP + H2O = 5-formamido-1-(5-phospho-D-ribosyl)imidazole-4-carboxamide. Its pathway is purine metabolism; IMP biosynthesis via de novo pathway; 5-formamido-1-(5-phospho-D-ribosyl)imidazole-4-carboxamide from 5-amino-1-(5-phospho-D-ribosyl)imidazole-4-carboxamide (10-formyl THF route): step 1/1. The protein operates within purine metabolism; IMP biosynthesis via de novo pathway; IMP from 5-formamido-1-(5-phospho-D-ribosyl)imidazole-4-carboxamide: step 1/1. In Geobacter sp. (strain M21), this protein is Bifunctional purine biosynthesis protein PurH.